The primary structure comprises 660 residues: Bifunctional polymyxin resistance protein ArnA (660 aa).

Residues 1–304 (MKAVIFAYHD…TLGLVAGARL (304 aa)) form a formyltransferase ArnAFT region. Histidine 104 (proton donor; for formyltransferase activity) is an active-site residue. (6R)-10-formyltetrahydrofolate contacts are provided by residues arginine 114 and 136–140 (VKRAD). Positions 314 to 660 (RRIRVLILGV…RSVDIAERAS (347 aa)) are dehydrogenase ArnADH. Residues aspartate 347 and 368-369 (DI) each bind NAD(+). Residues alanine 393, tyrosine 398, and 432-433 (TS) each bind UDP-alpha-D-glucuronate. Glutamate 434 (proton acceptor; for decarboxylase activity) is an active-site residue. UDP-alpha-D-glucuronate-binding positions include arginine 460, asparagine 492, 526-535 (KLIDGGQQKR), and tyrosine 613. Arginine 619 (proton donor; for decarboxylase activity) is an active-site residue.

The protein in the N-terminal section; belongs to the Fmt family. UDP-L-Ara4N formyltransferase subfamily. It in the C-terminal section; belongs to the NAD(P)-dependent epimerase/dehydratase family. UDP-glucuronic acid decarboxylase subfamily. In terms of assembly, homohexamer, formed by a dimer of trimers.

The catalysed reaction is UDP-alpha-D-glucuronate + NAD(+) = UDP-beta-L-threo-pentopyranos-4-ulose + CO2 + NADH. It carries out the reaction UDP-4-amino-4-deoxy-beta-L-arabinose + (6R)-10-formyltetrahydrofolate = UDP-4-deoxy-4-formamido-beta-L-arabinose + (6S)-5,6,7,8-tetrahydrofolate + H(+). It functions in the pathway nucleotide-sugar biosynthesis; UDP-4-deoxy-4-formamido-beta-L-arabinose biosynthesis; UDP-4-deoxy-4-formamido-beta-L-arabinose from UDP-alpha-D-glucuronate: step 1/3. The protein operates within nucleotide-sugar biosynthesis; UDP-4-deoxy-4-formamido-beta-L-arabinose biosynthesis; UDP-4-deoxy-4-formamido-beta-L-arabinose from UDP-alpha-D-glucuronate: step 3/3. It participates in bacterial outer membrane biogenesis; lipopolysaccharide biosynthesis. Functionally, bifunctional enzyme that catalyzes the oxidative decarboxylation of UDP-glucuronic acid (UDP-GlcUA) to UDP-4-keto-arabinose (UDP-Ara4O) and the addition of a formyl group to UDP-4-amino-4-deoxy-L-arabinose (UDP-L-Ara4N) to form UDP-L-4-formamido-arabinose (UDP-L-Ara4FN). The modified arabinose is attached to lipid A and is required for resistance to polymyxin and cationic antimicrobial peptides. The sequence is that of Bifunctional polymyxin resistance protein ArnA from Salmonella schwarzengrund (strain CVM19633).